Here is a 143-residue protein sequence, read N- to C-terminus: Putative RNA polymerase II subunit B1 CTD phosphatase RPAP2 homolog (143 aa).

An RTR1-type zinc finger spans residues 46–129 (SLLCEIGPPN…VPTSPLWLRD (84 aa)). Cysteine 69, cysteine 74, cysteine 105, and cysteine 109 together coordinate Zn(2+).

It belongs to the RPAP2 family.

The protein localises to the nucleus. The enzyme catalyses O-phospho-L-seryl-[protein] + H2O = L-seryl-[protein] + phosphate. It catalyses the reaction O-phospho-L-threonyl-[protein] + H2O = L-threonyl-[protein] + phosphate. In terms of biological role, putative RNA polymerase II subunit B1 C-terminal domain (CTD) phosphatase involved in RNA polymerase II transcription regulation. This is Putative RNA polymerase II subunit B1 CTD phosphatase RPAP2 homolog from Drosophila melanogaster (Fruit fly).